Reading from the N-terminus, the 620-residue chain is MKQSKMLIPTLREMPSDAQVISHALMVRAGYVRQVSAGIYAYMPLANRAIEKFKTIMREEFEKIGAVEMLAPALLTADLWRESGRYETYGEDLYKLKNRDNSDFILGPTHEETFTVLVRDAVKSYKQLPLNLYQIQSKYRDEKRPRNGLLRTREFIMKDAYSFHQNYEDLDVTYEDYRKAYEAIFTRAGLEFKAIIGDGGAMGGKDSQEFMAVTPERTDLNRWVVLDKSIASLDEIPEDVMEEIKNELTSWLVAGEDTIAYSTESSYAANLEMATNAYTPATKVVTQEEVSRVETPGCKSIDDVAAFLNIPEEQTIKTLLFTADDEPVVALLVGNDQVNDVKLKNYLAADFLKPATEDEARQVFGANFGSLGPVNLPENVRIIADRKVQDVANAVVGANEDGYHLTGVNPERDFKAEYVDIRKVKEGEISPDGQGVLQFARGIEIGHIFKLGTRYSESMGANVLDENGRAVPIIMGCYGIGVSRILSAVIEQHARLFVNKTPKGQYRYAWGINFPKELAPYDVHLITVNTKDEEANALTDRLEAALAAEGYDVLIDDRNERVGSKFSDSDLIGLPIRVTVGKKASEGVVEVKIKATGDTIEVNADNLIETLAILTTEQDA.

The protein belongs to the class-II aminoacyl-tRNA synthetase family. ProS type 1 subfamily. Homodimer.

The protein resides in the cytoplasm. It carries out the reaction tRNA(Pro) + L-proline + ATP = L-prolyl-tRNA(Pro) + AMP + diphosphate. Its function is as follows. Catalyzes the attachment of proline to tRNA(Pro) in a two-step reaction: proline is first activated by ATP to form Pro-AMP and then transferred to the acceptor end of tRNA(Pro). As ProRS can inadvertently accommodate and process non-cognate amino acids such as alanine and cysteine, to avoid such errors it has two additional distinct editing activities against alanine. One activity is designated as 'pretransfer' editing and involves the tRNA(Pro)-independent hydrolysis of activated Ala-AMP. The other activity is designated 'posttransfer' editing and involves deacylation of mischarged Ala-tRNA(Pro). The misacylated Cys-tRNA(Pro) is not edited by ProRS. The sequence is that of Proline--tRNA ligase from Streptococcus thermophilus (strain ATCC BAA-491 / LMD-9).